The sequence spans 273 residues: Large ribosomal subunit protein uL2 (273 aa).

Residues 221-263 are disordered; it reads RGTAMNPVDHPHGGGEGRNFGKHPVSPWGLQTKGKKTRKNKRT. Over residues 253–263 the composition is skewed to basic residues; sequence KGKKTRKNKRT.

This sequence belongs to the universal ribosomal protein uL2 family. In terms of assembly, part of the 50S ribosomal subunit. Forms a bridge to the 30S subunit in the 70S ribosome.

In terms of biological role, one of the primary rRNA binding proteins. Required for association of the 30S and 50S subunits to form the 70S ribosome, for tRNA binding and peptide bond formation. It has been suggested to have peptidyltransferase activity; this is somewhat controversial. Makes several contacts with the 16S rRNA in the 70S ribosome. This is Large ribosomal subunit protein uL2 from Buchnera aphidicola subsp. Baizongia pistaciae (strain Bp).